The sequence spans 81 residues: ATP synthase subunit c, chloroplastic (81 aa).

2 consecutive transmembrane segments (helical) span residues 3–23 (PIICAASVIGAGLAIGLGAIG) and 57–77 (LAFMEALTIYGLVVALAIIFA).

This sequence belongs to the ATPase C chain family. In terms of assembly, F-type ATPases have 2 components, F(1) - the catalytic core - and F(0) - the membrane proton channel. F(1) has five subunits: alpha(3), beta(3), gamma(1), delta(1), epsilon(1). F(0) has four main subunits: a(1), b(1), b'(1) and c(10-14). The alpha and beta chains form an alternating ring which encloses part of the gamma chain. F(1) is attached to F(0) by a central stalk formed by the gamma and epsilon chains, while a peripheral stalk is formed by the delta, b and b' chains.

Its subcellular location is the plastid. The protein localises to the chloroplast thylakoid membrane. In terms of biological role, f(1)F(0) ATP synthase produces ATP from ADP in the presence of a proton or sodium gradient. F-type ATPases consist of two structural domains, F(1) containing the extramembraneous catalytic core and F(0) containing the membrane proton channel, linked together by a central stalk and a peripheral stalk. During catalysis, ATP synthesis in the catalytic domain of F(1) is coupled via a rotary mechanism of the central stalk subunits to proton translocation. Its function is as follows. Key component of the F(0) channel; it plays a direct role in translocation across the membrane. A homomeric c-ring of between 10-14 subunits forms the central stalk rotor element with the F(1) delta and epsilon subunits. The sequence is that of ATP synthase subunit c, chloroplastic from Euglena gracilis.